We begin with the raw amino-acid sequence, 250 residues long: 1-(5-phosphoribosyl)-5-[(5-phosphoribosylamino)methylideneamino] imidazole-4-carboxamide isomerase (250 aa).

The Proton acceptor role is filled by D8. D131 acts as the Proton donor in catalysis.

It belongs to the HisA/HisF family.

It is found in the cytoplasm. It catalyses the reaction 1-(5-phospho-beta-D-ribosyl)-5-[(5-phospho-beta-D-ribosylamino)methylideneamino]imidazole-4-carboxamide = 5-[(5-phospho-1-deoxy-D-ribulos-1-ylimino)methylamino]-1-(5-phospho-beta-D-ribosyl)imidazole-4-carboxamide. Its pathway is amino-acid biosynthesis; L-histidine biosynthesis; L-histidine from 5-phospho-alpha-D-ribose 1-diphosphate: step 4/9. This chain is 1-(5-phosphoribosyl)-5-[(5-phosphoribosylamino)methylideneamino] imidazole-4-carboxamide isomerase, found in Paraburkholderia phytofirmans (strain DSM 17436 / LMG 22146 / PsJN) (Burkholderia phytofirmans).